We begin with the raw amino-acid sequence, 1196 residues long: DNA excision repair protein ERCC-5 homolog (1196 aa).

Positions M1–G78 are N-domain. Position 30 (D30) interacts with Mg(2+). The DNA-binding; may bind to the undamaged single-strand DNA of the DNA repair bubble stretch occupies residues I31–F67. Residue D77 participates in Mg(2+) binding. The interval E79 to V818 is spacer region. 4 disordered regions span residues P152–K176, K302–Q321, Q629–M661, and A722–S758. Residues E154–E168 show a composition bias toward acidic residues. Polar residues predominate over residues P311–Q321. The span at A722–Q731 shows a compositional bias: polar residues. Positions P734–D755 are enriched in basic and acidic residues. The I-domain stretch occupies residues A819–F914. Residues E822, E824, D843, and D845 each contribute to the Mg(2+) site. The DNA-binding; may bind to the undamaged single-strand DNA of the DNA repair bubble stretch occupies residues H853 to Q869. The interval R881–E913 is DNA-binding; H2TH (helix-2turn-helix) motif which binds double-stranded DNA. D894 is a Mg(2+) binding site. A DNA-binding; may bind double-stranded DNA region spans residues T945–L951. Residues C1075–K1196 are disordered. The Nuclear localization signal 1 motif lies at R1079–K1095. Over residues S1119–S1130 the composition is skewed to low complexity. Positions K1142–V1158 are enriched in polar residues. The Nuclear localization signal 2 signature appears at F1179–K1196.

This sequence belongs to the XPG/RAD2 endonuclease family. XPG subfamily. In terms of assembly, monomer. Homodimer. It depends on Mg(2+) as a cofactor.

Its subcellular location is the nucleus. The protein resides in the chromosome. Single-stranded structure-specific DNA endonuclease involved in DNA excision repair. Makes the 3'incision in DNA nucleotide excision repair (NER). Binds and bends DNA repair bubble substrate and breaks base stacking at the single-strand/double-strand DNA junction of the DNA bubble. Plays a role in base excision repair (BER) by promoting the binding of DNA glycosylase to its substrate and increasing DNA glycosylase catalytic activity that removes oxidized pyrimidines from DNA. Involved in transcription-coupled nucleotide excision repair (TCR) which allows RNA polymerase II-blocking lesions to be rapidly removed from the transcribed strand of active genes. Required for DNA replication fork maintenance and preservation of genomic stability. Involved in homologous recombination repair (HRR) induced by DNA replication stress. During HRR, binds to the replication fork with high specificity and stabilizes it. The protein is DNA excision repair protein ERCC-5 homolog (ercc5) of Xenopus laevis (African clawed frog).